A 189-amino-acid polypeptide reads, in one-letter code: Protein F29A7.6 (189 aa).

The tract at residues 124 to 161 is disordered; the sequence is KSLGGQKLAALDKKSQSKRERRQQNERNEETTGGRRFN. Basic and acidic residues predominate over residues 133–161; sequence ALDKKSQSKRERRQQNERNEETTGGRRFN.

The protein belongs to the MPP6 family.

The polypeptide is Protein F29A7.6 (Caenorhabditis elegans).